A 349-amino-acid polypeptide reads, in one-letter code: Anthranilate phosphoribosyltransferase (349 aa).

5-phospho-alpha-D-ribose 1-diphosphate is bound by residues G82, 85–86 (GD), 92–95 (NVST), 110–118 (KHGNRAVSG), and S122. Residue G82 coordinates anthranilate. Residue S94 coordinates Mg(2+). N113 is an anthranilate binding site. Anthranilate is bound at residue R168. Mg(2+) is bound by residues D227 and E228.

This sequence belongs to the anthranilate phosphoribosyltransferase family. As to quaternary structure, homodimer. Mg(2+) serves as cofactor.

It catalyses the reaction N-(5-phospho-beta-D-ribosyl)anthranilate + diphosphate = 5-phospho-alpha-D-ribose 1-diphosphate + anthranilate. It participates in amino-acid biosynthesis; L-tryptophan biosynthesis; L-tryptophan from chorismate: step 2/5. Functionally, catalyzes the transfer of the phosphoribosyl group of 5-phosphorylribose-1-pyrophosphate (PRPP) to anthranilate to yield N-(5'-phosphoribosyl)-anthranilate (PRA). The polypeptide is Anthranilate phosphoribosyltransferase (Pseudomonas fluorescens (strain Pf0-1)).